A 226-amino-acid chain; its full sequence is Cytidylate kinase (226 aa).

10-18 (GPASSGKST) contacts ATP.

It belongs to the cytidylate kinase family. Type 1 subfamily.

The protein resides in the cytoplasm. The catalysed reaction is CMP + ATP = CDP + ADP. It catalyses the reaction dCMP + ATP = dCDP + ADP. The polypeptide is Cytidylate kinase (Enterococcus faecalis (strain ATCC 700802 / V583)).